A 926-amino-acid polypeptide reads, in one-letter code: Serine/threonine-protein kinase SIK2 (926 aa).

Positions 20–271 (YDIEGTLGKG…IAQIKEHKWM (252 aa)) constitute a Protein kinase domain. Position 25 is a phosphothreonine (threonine 25). ATP is bound by residues 26–34 (LGKGNFAVV) and lysine 49. Residue lysine 53 is modified to N6-acetyllysine; by EP300. The Proton acceptor role is filled by aspartate 142. Threonine 175 carries the post-translational modification Phosphothreonine; by LKB1. Residues 295-335 (EFNEQVLRLMHSLGIDQQKTIESLQNKSYNHFAAIYFLLVE) form the UBA domain. Phosphothreonine is present on threonine 484. Residues serine 534 and serine 587 each carry the phosphoserine modification. 2 stretches are compositionally biased toward low complexity: residues 644 to 659 (SSCP…ESVS) and 742 to 756 (SSYP…LPRQ). Disordered stretches follow at residues 644-666 (SSCP…ASVH), 742-776 (SSYP…PLSP), and 801-896 (PLPS…SSYD). Polar residues predominate over residues 765–774 (APPFSLTQPL). The segment covering 822-834 (QPPPPPPPPPPRQ) has biased composition (pro residues).

The protein belongs to the protein kinase superfamily. CAMK Ser/Thr protein kinase family. SNF1 subfamily. Interacts with and phosphorylates TORC2/CRTC2. Mg(2+) is required as a cofactor. Post-translationally, phosphorylated at Thr-175 by STK11/LKB1 in complex with STE20-related adapter-alpha (STRADA) pseudo kinase and CAB39. Phosphorylated at Thr-484 in response to insulin in adipocytes. Acetylation at Lys-53 inhibits kinase activity. Deacetylated by HDAC6.

It is found in the cytoplasm. It localises to the endoplasmic reticulum membrane. The catalysed reaction is L-seryl-[protein] + ATP = O-phospho-L-seryl-[protein] + ADP + H(+). It catalyses the reaction L-threonyl-[protein] + ATP = O-phospho-L-threonyl-[protein] + ADP + H(+). Activated by phosphorylation on Thr-175. Its function is as follows. Serine/threonine-protein kinase that plays a role in many biological processes such as fatty acid oxidation, autophagy, immune response or glucose metabolism. Phosphorylates 'Ser-794' of IRS1 in insulin-stimulated adipocytes, potentially modulating the efficiency of insulin signal transduction. Inhibits CREB activity by phosphorylating and repressing TORCs, the CREB-specific coactivators. Phosphorylates EP300 and thus inhibits its histone acetyltransferase activity. In turn, regulates the DNA-binding ability of several transcription factors such as PPARA or MLXIPL. Also plays a role in thymic T-cell development. In Homo sapiens (Human), this protein is Serine/threonine-protein kinase SIK2 (SIK2).